A 316-amino-acid polypeptide reads, in one-letter code: ATP synthase gamma chain (316 aa).

It belongs to the ATPase gamma chain family. As to quaternary structure, F-type ATPases have 2 components, CF(1) - the catalytic core - and CF(0) - the membrane proton channel. CF(1) has five subunits: alpha(3), beta(3), gamma(1), delta(1), epsilon(1). CF(0) has three main subunits: a, b and c.

The protein localises to the cellular thylakoid membrane. Its function is as follows. Produces ATP from ADP in the presence of a proton gradient across the membrane. The gamma chain is believed to be important in regulating ATPase activity and the flow of protons through the CF(0) complex. The polypeptide is ATP synthase gamma chain (Prochlorococcus marinus (strain MIT 9215)).